The following is a 525-amino-acid chain: MTDNIHKHRILILDFGSQYTQLVARRVRELGVYCELWAWDVTEEQIRGFNPNGIILSGGPESTTEENSPRAPEYVFNAGVPVLGVCYGMQTMAMQLGGHVEGSNEREFGYAQVEVKTDSALVRGIEDALSADGNPLLDVWMSHGDKVTAIPSDFVTVASTETCPFAIMANEEKRFYGVQFHPEVTHTRQGLRMLERFVRDICECEALWTPAKIIDDAVERIRQQVGNDRVILGLSGGVDSSVTAMLLHRAIGDRLTCVFVDNGLLRLNEAEQVMDMFGDHFGLNIVHVPAEARFLDALAGIDEPEAKRKTIGRVFVEVFDEEALKLEDVKWLAQGTIYPDVIESAASATGKAHVIKSHHNVGGLPKEMKMGLVEPLKELFKDEVRKIGLELGLPYDMLYRHPFPGPGLGVRVLGEVKKEYCDLLRRADAIFIEELRRADLYDKVSQAFAVFLPVRSVGVMGDGRKYDWVVSLRAVETIDFMTAHWAHLPYDFLGRVSNRIINEINGISRVVYDISGKPPATIEWE.

The region spanning 9–207 (RILILDFGSQ…VRDICECEAL (199 aa)) is the Glutamine amidotransferase type-1 domain. Catalysis depends on Cys-86, which acts as the Nucleophile. Catalysis depends on residues His-181 and Glu-183. Residues 208–400 (WTPAKIIDDA…LGLPYDMLYR (193 aa)) form the GMPS ATP-PPase domain. Position 235–241 (235–241 (SGGVDSS)) interacts with ATP.

In terms of assembly, homodimer.

The enzyme catalyses XMP + L-glutamine + ATP + H2O = GMP + L-glutamate + AMP + diphosphate + 2 H(+). It functions in the pathway purine metabolism; GMP biosynthesis; GMP from XMP (L-Gln route): step 1/1. Catalyzes the synthesis of GMP from XMP. The protein is GMP synthase [glutamine-hydrolyzing] of Cronobacter sakazakii (strain ATCC BAA-894) (Enterobacter sakazakii).